The sequence spans 938 residues: Scm-like with four MBT domains protein 2 (938 aa).

Residues 1 to 32 form a disordered region; sequence MERYLPVSKKRNSSSSLEKITGSANGNGTLYS. Positions 13-30 are enriched in polar residues; it reads SSSSLEKITGSANGNGTL. MBT repeat units lie at residues 43 to 143, 151 to 255, 265 to 371, and 379 to 475; these read FSWG…LRPP, SDWT…MDPP, FEWK…LAPP, and FNWV…LTTP. The disordered stretch occupies residues 742–836; that stretch reads PEGIPESLPE…TVPTTASSNN (95 aa). Composition is skewed to basic and acidic residues over residues 765 to 777 and 809 to 822; these read TEQEKRETLDTAR and RNSEALKRPPVERA. One can recognise an SAM domain in the interval 868 to 931; sequence WSVTDVVRFI…CHQIERVKVA (64 aa).

Interacts with YY1. Interacts with methylated histones H3K9me2 and H4K20me2. Expressed in testis and, at much lower levels, in ovary.

It localises to the nucleus. Its function is as follows. Transcriptional repressor of HOXB13 gene. This Mus musculus (Mouse) protein is Scm-like with four MBT domains protein 2 (Sfmbt2).